The following is a 540-amino-acid chain: Chaperonin GroEL (540 aa).

ATP is bound by residues 29 to 32, 86 to 90, G413, 476 to 478, and D492; these read TLGP, DGTTT, and NAA.

It belongs to the chaperonin (HSP60) family. Forms a cylinder of 14 subunits composed of two heptameric rings stacked back-to-back. Interacts with the co-chaperonin GroES.

It localises to the cytoplasm. It catalyses the reaction ATP + H2O + a folded polypeptide = ADP + phosphate + an unfolded polypeptide.. Functionally, together with its co-chaperonin GroES, plays an essential role in assisting protein folding. The GroEL-GroES system forms a nano-cage that allows encapsulation of the non-native substrate proteins and provides a physical environment optimized to promote and accelerate protein folding. The protein is Chaperonin GroEL of Geobacillus thermodenitrificans (strain NG80-2).